The primary structure comprises 90 residues: Caspase recruitment domain-containing protein 18 (90 aa).

Positions 1–90 (MADQLLRKKR…PQLASKMGLH (90 aa)) constitute a CARD domain.

Interacts with pro-CASP1. Interacts with CARD8. Primarily expressed in the heart and placenta.

Inhibits generation of IL-1-beta by interacting with caspase-1 and preventing its association with RIP2. Down-regulates the release of IL1B. In Homo sapiens (Human), this protein is Caspase recruitment domain-containing protein 18 (CARD18).